The primary structure comprises 336 residues: N-acetyl-gamma-glutamyl-phosphate reductase (336 aa).

Cysteine 148 is a catalytic residue.

The protein belongs to the NAGSA dehydrogenase family. Type 1 subfamily.

The protein localises to the cytoplasm. It catalyses the reaction N-acetyl-L-glutamate 5-semialdehyde + phosphate + NADP(+) = N-acetyl-L-glutamyl 5-phosphate + NADPH + H(+). It functions in the pathway amino-acid biosynthesis; L-arginine biosynthesis; N(2)-acetyl-L-ornithine from L-glutamate: step 3/4. In terms of biological role, catalyzes the NADPH-dependent reduction of N-acetyl-5-glutamyl phosphate to yield N-acetyl-L-glutamate 5-semialdehyde. The protein is N-acetyl-gamma-glutamyl-phosphate reductase of Campylobacter curvus (strain 525.92).